Consider the following 559-residue polypeptide: GTP diphosphokinase CRSH2, chloroplastic (559 aa).

The N-terminal 37 residues, Met1 to Gly37, are a transit peptide targeting the chloroplast. In terms of domain architecture, HD spans Ser87 to Met187. 2 consecutive EF-hand domains span residues Ala449–Gly484 and Lys486–Lys518. The Ca(2+) site is built by Asp462, Asn464, Asp466, Arg468, Glu473, Asp496, Asn498, Asp500, Ser502, and Glu507.

Belongs to the RelA/SpoT family. Expressed in shoots.

The protein resides in the plastid. Its subcellular location is the chloroplast. The enzyme catalyses GTP + ATP = guanosine 3'-diphosphate 5'-triphosphate + AMP. Activated by calcium. Its function is as follows. Possesses calcium-dependent ppGpp (guanosine 3'-diphosphate 5'-diphosphate) synthetase activity in vitro and is able to functionally complement E.coli relA mutants. May be involved in a rapid plant ppGpp-mediated response to pathogens and other stresses. This chain is GTP diphosphokinase CRSH2, chloroplastic, found in Oryza sativa subsp. japonica (Rice).